The following is a 131-amino-acid chain: Transcription antitermination protein NusB (131 aa).

Belongs to the NusB family.

In terms of biological role, involved in transcription antitermination. Required for transcription of ribosomal RNA (rRNA) genes. Binds specifically to the boxA antiterminator sequence of the ribosomal RNA (rrn) operons. This chain is Transcription antitermination protein NusB, found in Caldicellulosiruptor saccharolyticus (strain ATCC 43494 / DSM 8903 / Tp8T 6331).